A 107-amino-acid polypeptide reads, in one-letter code: Phosphoribosyl-ATP pyrophosphatase (107 aa).

This sequence belongs to the PRA-PH family.

It is found in the cytoplasm. It carries out the reaction 1-(5-phospho-beta-D-ribosyl)-ATP + H2O = 1-(5-phospho-beta-D-ribosyl)-5'-AMP + diphosphate + H(+). Its pathway is amino-acid biosynthesis; L-histidine biosynthesis; L-histidine from 5-phospho-alpha-D-ribose 1-diphosphate: step 2/9. The sequence is that of Phosphoribosyl-ATP pyrophosphatase from Methylobacterium nodulans (strain LMG 21967 / CNCM I-2342 / ORS 2060).